The chain runs to 356 residues: Peptide chain release factor 1 (356 aa).

Q235 carries the post-translational modification N5-methylglutamine.

Belongs to the prokaryotic/mitochondrial release factor family. Methylated by PrmC. Methylation increases the termination efficiency of RF1.

Its subcellular location is the cytoplasm. Functionally, peptide chain release factor 1 directs the termination of translation in response to the peptide chain termination codons UAG and UAA. This is Peptide chain release factor 1 from Hydrogenobaculum sp. (strain Y04AAS1).